Reading from the N-terminus, the 692-residue chain is A-kinase anchor protein 8 (692 aa).

Positions 1–195 (MDQGYGGYGA…FMRGRGQGRF (195 aa)) are interaction with MCM2. Positions 1–210 (MDQGYGGYGA…PGTFMRSDPF (210 aa)) are interaction with DPY30. An Asymmetric dimethylarginine; alternate modification is found at Arg-109. Arg-109 is modified (omega-N-methylarginine; alternate). Positions 109–201 (RGGSGGGGEG…QGRFQDRSNP (93 aa)) are interaction with DDX5. Residue Ser-112 is modified to Phosphoserine. Disordered regions lie at residues 168 to 203 (GQYSECRDPARERGSLDGFMRGRGQGRFQDRSNPGT), 231 to 254 (GGRGLGGPSPSRPPPSLFSQSMAP), and 269 to 382 (STMP…RTRD). A compositionally biased stretch (basic and acidic residues) spans 172–182 (ECRDPARERGS). Ser-199 bears the Phosphoserine mark. An omega-N-methylarginine mark is found at Arg-233 and Arg-277. Basic and acidic residues-rich tracts occupy residues 281-297 (RMRDRDRPKRRGFDRFG) and 314-323 (PDTKLARVDS). Positions 289 to 306 (KRRGFDRFGPDGTGRKRK) match the Bipartite nuclear localization signal motif. Lys-317 is covalently cross-linked (Glycyl lysine isopeptide (Lys-Gly) (interchain with G-Cter in SUMO2)). Ser-323, Ser-328, and Ser-339 each carry phosphoserine. The span at 324-334 (EGDFSENDDAA) shows a compositional bias: acidic residues. The interval 387–450 (RIQFACSVCK…NKKIEKRRQE (64 aa)) is involved in chromatin-binding. 2 C2H2 AKAP95-type zinc fingers span residues 392-414 (CSVCKFRSFDDEEIQKHLQSKFH) and 481-504 (CLACDMLIPAQPQLLQRHLHSVDH). The segment at 525 to 569 (SVLNNRHIVKMLEKYLKGEDPFTSETVDPEMEGDDNLGGEDKKET) is involved in condensin complex recruitment. Residues 545 to 571 (PFTSETVDPEMEGDDNLGGEDKKETPE) are disordered. Over residues 551 to 562 (VDPEMEGDDNLG) the composition is skewed to acidic residues. Residue Lys-567 forms a Glycyl lysine isopeptide (Lys-Gly) (interchain with G-Cter in SUMO2) linkage. The RII-binding stretch occupies residues 572–589 (EVAADVLAEVITAAVRAV). A required for interaction with MYCBP region spans residues 576 to 593 (DVLAEVITAAVRAVDGEG). Residues 592-692 (EGAPAPESSG…AESKDAVPTE (101 aa)) form a disordered region. The span at 634–646 (AHEKGVPKARSEA) shows a compositional bias: basic and acidic residues. Ser-662 is modified (phosphoserine). Over residues 663–675 (AQTRVAPAPAAAD) the composition is skewed to low complexity. A compositionally biased stretch (basic and acidic residues) spans 683-692 (AESKDAVPTE). Position 685 is a phosphoserine (Ser-685).

Belongs to the AKAP95 family. Binds to the PKA RII-alpha regulatory subunit PRKAR2A (phosphorylated at 'Thr-54') during mitosis. Interacts (via C-terminus) with FIGN. Interacts with NCAPD2, CCND1, MCM2, RPS6KA1, PDE4A. Interacts with CCND3, CCNE1, DDX5, CASP3. Interacts with NFKB1; detetcted in the cytoplasm. Interacts with MYCBP; MYCBP is translocated to the nucleus and the interaction prevents the association of the PKA catalytic subunit leading to suppression of PKA activity. Interacts with DPY30; mediating AKAP8 association with at least the MLL4/WBP7 HMT complex. Interacts with HDAC3; increased during mitosis. Interacts with GJA1; in the nucleus and in the nuclear membrane; the nuclear association increases with progress of cell cycle G1, S and G2 phase and decreases in M phase. In terms of processing, phosphorylated on tyrosine residues probably by SRC subfamily protein kinases; multiple phosphorylation is leading to dissociation from nuclear structures implicated in chromatin structural changes. In terms of tissue distribution, highly expressed in heart, liver, skeletal muscle, kidney and pancreas. Expressed in mature dendritic cells.

The protein localises to the nucleus. It localises to the nucleus matrix. The protein resides in the nucleolus. Its subcellular location is the cytoplasm. Anchoring protein that mediates the subcellular compartmentation of cAMP-dependent protein kinase (PKA type II). Acts as an anchor for a PKA-signaling complex onto mitotic chromosomes, which is required for maintenance of chromosomes in a condensed form throughout mitosis. Recruits condensin complex subunit NCAPD2 to chromosomes required for chromatin condensation; the function appears to be independent from PKA-anchoring. May help to deliver cyclin D/E to CDK4 to facilitate cell cycle progression. Required for cell cycle G2/M transition and histone deacetylation during mitosis. In mitotic cells recruits HDAC3 to the vicinity of chromatin leading to deacetylation and subsequent phosphorylation at 'Ser-10' of histone H3; in this function may act redundantly with AKAP8L. Involved in nuclear retention of RPS6KA1 upon ERK activation thus inducing cell proliferation. May be involved in regulation of DNA replication by acting as scaffold for MCM2. Enhances HMT activity of the KMT2 family MLL4/WBP7 complex and is involved in transcriptional regulation. In a teratocarcinoma cell line is involved in retinoic acid-mediated induction of developmental genes implicating H3 'Lys-4' methylation. May be involved in recruitment of active CASP3 to the nucleus in apoptotic cells. May act as a carrier protein of GJA1 for its transport to the nucleus. May play a repressive role in the regulation of rDNA transcription. Preferentially binds GC-rich DNA in vitro. In cells, associates with ribosomal RNA (rRNA) chromatin, preferentially with rRNA promoter and transcribed regions. Involved in modulation of Toll-like receptor signaling. Required for the cAMP-dependent suppression of TNF-alpha in early stages of LPS-induced macrophage activation; the function probably implicates targeting of PKA to NFKB1. The chain is A-kinase anchor protein 8 (AKAP8) from Homo sapiens (Human).